The chain runs to 132 residues: Phycocyanin PC645 alpha-1 subunit (132 aa).

Positions 54 and 68 each coordinate (2R,3E)-phycocyanobilin. Residues Cys-70, Gln-76, Tyr-77, and Lys-92 each coordinate mesobiliverdin. The 15,16-dihydrobiliverdin site is built by Pro-123 and Ile-125.

This sequence belongs to the phycoerythrin family. Heterotetramer of 2 different alpha chains and 2 identical beta chains which form 2 alpha-beta heterodimers within the heterotetramer. In terms of processing, contains two phycocyanobilin chromophores, one mesobiliverdin chromophore and one 15,16-dihydrobiliverdin chromophore with binding mediated by both the alpha and beta subunits.

The protein localises to the plastid. Its subcellular location is the chloroplast thylakoid membrane. Functionally, light-harvesting photosynthetic tetrapyrrole chromophore-protein from the phycobiliprotein complex. This is Phycocyanin PC645 alpha-1 subunit from Chroomonas sp. (strain CCMP270).